A 542-amino-acid polypeptide reads, in one-letter code: MEVREIPLPAATKLAADYITGAFPAESGFAYAQADDEAFCRRLAYLQGRTYDREGLADYLRAYHRRFSASVATMANIEKLRNERSVVIVGGQQAGLLTGPLYTIYKIITIIQLAKEQERKLGVPVVPLFWIAGEDHDIAEIDHVYVVEEGEVKKAAYPHKTNEKRMAADVLLDRMAAKEWIERVVKTYGETDVTNELLFFLSSCLDEARTFVDFFAAIVLRLFADHGLVVLNAGDAAVRPLERRFFAALIERHRDVTAAVLAQQEALRTLGYAPLIEIGRDAANLFYYDGRERSLLQYDEERGLFHNKAGTLVWTREELLELAETNPARLSNNVVTRPLMQEHLLPTLAFVAGPGEIAYWAELKEAFPLFDLEMPPVVPRLQATIVSRSLQTDLSDIGLEVADVLTGRLDEAKREWREATAQAPLASAFAKAKADIDAAHRPLRELGVAIDRGLEGLVAKNAAILQAQIEFLQHALERALLRKHETEWRKFWRIETSLRPNGALQERVWNVFYYINRYGFDFVEKLLAIRSPGNGMHKIVYM.

Residues 458–487 adopt a coiled-coil conformation; that stretch reads VAKNAAILQAQIEFLQHALERALLRKHETE.

The protein belongs to the BshC family.

In terms of biological role, involved in bacillithiol (BSH) biosynthesis. May catalyze the last step of the pathway, the addition of cysteine to glucosamine malate (GlcN-Mal) to generate BSH. The protein is Putative cysteine ligase BshC of Geobacillus kaustophilus (strain HTA426).